The following is a 274-amino-acid chain: Large ribosomal subunit protein uL2cy (274 aa).

Disordered regions lie at residues 1-25 (MAIH…VKSN) and 223-274 (MNPV…RRSK). The segment covering 7–25 (KTSTPSTRNGTVDSQVKSN) has biased composition (polar residues).

It belongs to the universal ribosomal protein uL2 family. In terms of assembly, part of the 50S ribosomal subunit.

The protein localises to the plastid. It is found in the chloroplast. The protein is Large ribosomal subunit protein uL2cy (rpl2-B) of Atropa belladonna (Belladonna).